The primary structure comprises 329 residues: DNA-directed RNA polymerase subunit alpha (329 aa).

Positions 1 to 234 are alpha N-terminal domain (alpha-NTD); sequence MQGSVTEFLK…EQLDAFVELR (234 aa). Residues 248 to 329 are alpha C-terminal domain (alpha-CTD); that stretch reads FDPILLRPVD…WPPASLADDL (82 aa).

It belongs to the RNA polymerase alpha chain family. In terms of assembly, homodimer. The RNAP catalytic core consists of 2 alpha, 1 beta, 1 beta' and 1 omega subunit. When a sigma factor is associated with the core the holoenzyme is formed, which can initiate transcription.

The catalysed reaction is RNA(n) + a ribonucleoside 5'-triphosphate = RNA(n+1) + diphosphate. Functionally, DNA-dependent RNA polymerase catalyzes the transcription of DNA into RNA using the four ribonucleoside triphosphates as substrates. This Shewanella loihica (strain ATCC BAA-1088 / PV-4) protein is DNA-directed RNA polymerase subunit alpha.